Consider the following 490-residue polypeptide: UDP-N-acetylmuramate--L-alanine ligase (490 aa).

133–139 lines the ATP pocket; that stretch reads GTHGKTS.

This sequence belongs to the MurCDEF family.

Its subcellular location is the cytoplasm. The enzyme catalyses UDP-N-acetyl-alpha-D-muramate + L-alanine + ATP = UDP-N-acetyl-alpha-D-muramoyl-L-alanine + ADP + phosphate + H(+). The protein operates within cell wall biogenesis; peptidoglycan biosynthesis. Its function is as follows. Cell wall formation. The protein is UDP-N-acetylmuramate--L-alanine ligase of Saccharopolyspora erythraea (strain ATCC 11635 / DSM 40517 / JCM 4748 / NBRC 13426 / NCIMB 8594 / NRRL 2338).